The following is a 159-amino-acid chain: Elicitor-responsive protein 1 (159 aa).

Residues 1–112 enclose the C2 domain; it reads MAGSGVLEVH…SLGMEHGTWE (112 aa). The Ca(2+) site is built by aspartate 21 and aspartate 30. Serine 44 bears the Phosphoserine; by CPK mark. 4 residues coordinate Ca(2+): aspartate 81, aspartate 83, serine 86, and aspartate 89.

The cofactor is Ca(2+). Post-translationally, phosphorylated at Ser-44 by CPK18 in a calcium-dependent manner. Isoform 2 is expressed in young vascular tissues and tiller buds.

The protein localises to the cytoplasm. It is found in the cell membrane. Functionally, may play a role in plant defense signaling. Isoform 2 binds to phospholipids in a Ca(2+)-dependent manner in response to pathogen elicitors. This is Elicitor-responsive protein 1 (ERG1) from Oryza sativa subsp. japonica (Rice).